A 900-amino-acid polypeptide reads, in one-letter code: Methionine--tRNA ligase, cytoplasmic (900 aa).

Positions 74–198 (GWEQDDLTNQ…VLKQQGVLAL (125 aa)) constitute a GST C-terminal domain. A 'HIGH' region motif is present at residues 273–283 (PYVNNVPHLGN). Residues 593–597 (KFSKS) carry the 'KMSKS' region motif. K596 contacts ATP. S825 carries the phosphoserine modification. Residue T835 is modified to Phosphothreonine. Residues 841–897 (QIQALMDEVTKQGNIVRELKAQKADKNEVAAEVAKLLDLKKQLAVAEGKPPEAPKGK) enclose the WHEP-TRS domain.

This sequence belongs to the class-I aminoacyl-tRNA synthetase family. In terms of assembly, monomer. Part of a multisubunit complex that groups tRNA ligases for Arg (RARS1), Asp (DARS1), Gln (QARS1), Ile (IARS1), Leu (LARS1), Lys (KARS1), Met (MARS1) the bifunctional ligase for Glu and Pro (EPRS1) and the auxiliary subunits AIMP1/p43, AIMP2/p38 and EEF1E1/p18. Forms a linear complex that contains MARS1, EEF1E1, EPRS1 and AIMP2 that is at the core of the multisubunit complex.

The protein resides in the cytoplasm. Its subcellular location is the cytosol. It is found in the nucleus. The protein localises to the nucleolus. The catalysed reaction is tRNA(Met) + L-methionine + ATP = L-methionyl-tRNA(Met) + AMP + diphosphate. Enzyme activity is increased by spermidine, EEF1A1, and when the Mg(2+) concentration is increased from 5 mM to 13 mM (in vitro), possibly by promoting the dissociation of the complex between the enzyme and its product. Functionally, catalyzes the specific attachment of an amino acid to its cognate tRNA in a 2 step reaction: the amino acid (AA) is first activated by ATP to form AA-AMP and then transferred to the acceptor end of the tRNA. Plays a role in the synthesis of ribosomal RNA in the nucleolus. The chain is Methionine--tRNA ligase, cytoplasmic from Homo sapiens (Human).